A 140-amino-acid polypeptide reads, in one-letter code: L-fucose mutarotase (140 aa).

The Proton donor role is filled by histidine 22. Substrate is bound by residues aspartate 30, arginine 107, and 129–131 (YGN).

The protein belongs to the RbsD / FucU family. FucU mutarotase subfamily. In terms of assembly, homodecamer.

The protein resides in the cytoplasm. It catalyses the reaction alpha-L-fucose = beta-L-fucose. The protein operates within carbohydrate metabolism; L-fucose metabolism. Functionally, involved in the anomeric conversion of L-fucose. This chain is L-fucose mutarotase, found in Shigella boydii serotype 18 (strain CDC 3083-94 / BS512).